We begin with the raw amino-acid sequence, 75 residues long: Large ribosomal subunit protein bL31 (75 aa).

This sequence belongs to the bacterial ribosomal protein bL31 family. Type A subfamily. Part of the 50S ribosomal subunit.

Binds the 23S rRNA. This chain is Large ribosomal subunit protein bL31, found in Sphingopyxis alaskensis (strain DSM 13593 / LMG 18877 / RB2256) (Sphingomonas alaskensis).